The sequence spans 528 residues: Probable serine protease HtrA1 (528 aa).

Positions 1–70 are disordered; that stretch reads MDTRVDTDNA…RPSGVQGSFV (70 aa). Residues 1 to 178 lie on the Cytoplasmic side of the membrane; it reads MDTRVDTDNA…DVLFGGKVSY (178 aa). Residues 31–40 are compositionally biased toward gly residues; the sequence is NNGGPNGGGR. A helical membrane pass occupies residues 179–199; it reads LALGILVAIALVIGGIGGVIG. At 200–528 the chain is on the periplasmic side; it reads RKTAEVVDAF…LTVKPDPDST (329 aa). Residues histidine 270, aspartate 306, and serine 387 each act as charge relay system in the active site. The region spanning 426 to 487 is the PDZ domain; sequence LVANSLIKDG…VIVKVGNRAV (62 aa).

The protein belongs to the peptidase S1C family. In terms of assembly, the C-terminal region exhibits both monomeric and trimeric forms in solution.

The protein resides in the cell inner membrane. The enzyme catalyses Acts on substrates that are at least partially unfolded. The cleavage site P1 residue is normally between a pair of hydrophobic residues, such as Val-|-Val.. Essential protein that may act as a regulatory protease that is conditionally activated upon appropriate environmental triggers. The protein is Probable serine protease HtrA1 of Mycobacterium tuberculosis (strain ATCC 25618 / H37Rv).